The following is a 166-amino-acid chain: Large ribosomal subunit protein uL10 (166 aa).

This sequence belongs to the universal ribosomal protein uL10 family. In terms of assembly, part of the ribosomal stalk of the 50S ribosomal subunit. The N-terminus interacts with L11 and the large rRNA to form the base of the stalk. The C-terminus forms an elongated spine to which L12 dimers bind in a sequential fashion forming a multimeric L10(L12)X complex.

Functionally, forms part of the ribosomal stalk, playing a central role in the interaction of the ribosome with GTP-bound translation factors. The sequence is that of Large ribosomal subunit protein uL10 from Staphylococcus carnosus (strain TM300).